We begin with the raw amino-acid sequence, 174 residues long: NADH-quinone oxidoreductase subunit C (174 aa).

The protein belongs to the complex I 30 kDa subunit family. NDH-1 is composed of 14 different subunits. Subunits NuoB, C, D, E, F, and G constitute the peripheral sector of the complex.

It localises to the cell membrane. It carries out the reaction a quinone + NADH + 5 H(+)(in) = a quinol + NAD(+) + 4 H(+)(out). Its function is as follows. NDH-1 shuttles electrons from NADH, via FMN and iron-sulfur (Fe-S) centers, to quinones in the respiratory chain. The immediate electron acceptor for the enzyme in this species is believed to be ubiquinone. Couples the redox reaction to proton translocation (for every two electrons transferred, four hydrogen ions are translocated across the cytoplasmic membrane), and thus conserves the redox energy in a proton gradient. The sequence is that of NADH-quinone oxidoreductase subunit C from Roseiflexus castenholzii (strain DSM 13941 / HLO8).